A 243-amino-acid chain; its full sequence is MAGAHSTPLWSRHLLKAVLMVLVALFLVHSASAQSHREFASPGQQKKETSADILTQIGRSLKEMLDTWLGPETMHVISETLLQVMWAISSAISVACFALSGIAAQLLSALGLDGEQLTQGLKLSPSQVQTLLLWGAAALVIYWLLSLLLGLVLALLGRILGGLKLVLFVAGFVALVRSVPDPSTRALMLLALLTLFALLSRLTGSRSSGSHLEAKVRGLERQIEELRGRQRRAAKMPRSMEEE.

The signal sequence occupies residues 1–33; the sequence is MAGAHSTPLWSRHLLKAVLMVLVALFLVHSASA. Over 34–83 the chain is Lumenal; that stretch reads QSHREFASPGQQKKETSADILTQIGRSLKEMLDTWLGPETMHVISETLLQ. Residues 84-104 form a helical membrane-spanning segment; sequence VMWAISSAISVACFALSGIAA. The Cytoplasmic segment spans residues 105–135; the sequence is QLLSALGLDGEQLTQGLKLSPSQVQTLLLWG. The helical transmembrane segment at 136-156 threads the bilayer; that stretch reads AAALVIYWLLSLLLGLVLALL. Over 157–185 the chain is Lumenal; sequence GRILGGLKLVLFVAGFVALVRSVPDPSTR. Residues 186–205 form a helical membrane-spanning segment; sequence ALMLLALLTLFALLSRLTGS. Topologically, residues 206-243 are cytoplasmic; the sequence is RSSGSHLEAKVRGLERQIEELRGRQRRAAKMPRSMEEE.

As to quaternary structure, homooligomer. Interacts with CRYAB; in the cellular response to DNA damage.

It localises to the nucleus outer membrane. The protein localises to the endoplasmic reticulum membrane. The protein resides in the sarcoplasmic reticulum membrane. It catalyses the reaction K(+)(in) = K(+)(out). The enzyme catalyses Ca(2+)(in) = Ca(2+)(out). Functions as a voltage-gated monoatomic cation channel permeable to both potassium and calcium. Plays a role in the cellular response to DNA damage. The sequence is that of Voltage-gated monoatomic cation channel TMEM109 from Mus musculus (Mouse).